The primary structure comprises 500 residues: Cytochrome P450 726A27 (500 aa).

Residues I7–W27 traverse the membrane as a helical; Signal-anchor for type II membrane protein segment. C440 is a binding site for heme.

This sequence belongs to the cytochrome P450 family. Heme serves as cofactor. As to expression, expressed in mature seeds.

Its subcellular location is the membrane. It catalyses the reaction (-)-casbene + reduced [NADPH--hemoprotein reductase] + O2 = 4-hydroxycasbene + oxidized [NADPH--hemoprotein reductase] + H2O + H(+). The catalysed reaction is 8-hydroxycasbene + reduced [NADPH--hemoprotein reductase] + O2 = 4,8-dihydroxycasbene + oxidized [NADPH--hemoprotein reductase] + H2O + H(+). The enzyme catalyses 4,8-dihydroxycasbene + reduced [NADPH--hemoprotein reductase] + O2 = 4,5,8-trihydroxycasbene + oxidized [NADPH--hemoprotein reductase] + H2O + H(+). It functions in the pathway secondary metabolite biosynthesis; terpenoid biosynthesis. In terms of biological role, involved in the biosynthesis of macrocyclic lathyrane type diterpenoids (also called Euphorbia factors) natural products, including the cyclization route from casbene to jolkinol C, a precursor for ingenol mebutate that is used to treat actinic keratosis, a precancerous skin condition. Catalyzes the hydroxylation of (-)-casbene and 8-hydroxycasbene to produce 4-hydroxycasbene and 4,8-dihydroxycasbene, respectively. The chain is Cytochrome P450 726A27 from Euphorbia lathyris (Caper spurge).